Consider the following 335-residue polypeptide: Rho guanine nucleotide exchange factor 39 (335 aa).

The DH domain maps to 22 to 197; sequence KRACTARELL…SETAQRVHTI (176 aa). Residues 227 to 331 enclose the PH domain; that stretch reads WFLRQGWLLV…WYHSLTWAIS (105 aa).

Strongly expressed in hepatocellular carcinoma (HCC) compared with their non-cancerous counterparts.

It localises to the cell membrane. Its function is as follows. Promotes cell proliferation. In Homo sapiens (Human), this protein is Rho guanine nucleotide exchange factor 39 (ARHGEF39).